The following is a 456-amino-acid chain: MISPTMEQGESLRIRVVMGKDRISELPDGLLLKILSSLPTNIVVATSVLSKQWRSLWKLVPNLEFDSDDYESEHYTFSEIVCKSFLSHKAPVLESFRLKFVNFNPVDIGLWVGIAFSRHLRELVLDFYPAELGKGVTFTFPSSLCTCNTLETLKLVLCILVDIPSPVLMKSLRTLHLEFVRYKDESSVRNLLSGCPGLEELRLYRGDDSDIKVFTIEVPSLQRLTIHDNNDGPEFWGYVINAPFLKYLLIEELRCPEFCLNAPELVEANIAEVTSITIEKFLGSFTSVSRLLLNLSPLKITYPTGSMFYQLVSLEMYTREAEWWNLLTLMLENSPKLQVLKLTDRSQNFHKDGLVSGKWNEPKDVPECLLSQLETFVWRRFDWGREEEKEIATYILKNGRRLKKATFSTNPIESEELNKLKERRKVLNGLDGVVRASNSCQLVFKFDPSYLGSDSP.

One can recognise an F-box domain in the interval 20-73 (KDRISELPDGLLLKILSSLPTNIVVATSVLSKQWRSLWKLVPNLEFDSDDYESE). LRR repeat units follow at residues 74–100 (HYTF…RLKF), 102–127 (NFNP…VLDF), 152–179 (TLKL…HLEF), 180–205 (VRYK…RLYR), 225–252 (TIHD…LIEE), 270–295 (IAEV…LLNL), and 318–344 (TREA…KLTD). An FBD domain is found at 358–409 (KWNEPKDVPECLLSQLETFVWRRFDWGREEEKEIATYILKNGRRLKKATFST).

The polypeptide is F-box/FBD/LRR-repeat protein At3g52680 (Arabidopsis thaliana (Mouse-ear cress)).